A 416-amino-acid chain; its full sequence is Serine/threonine-protein kinase 26 (416 aa).

An N-acetylalanine modification is found at Ala-2. Residue Ser-4 is modified to Phosphoserine. The Protein kinase domain occupies 24–274 (FTKLERIGKG…AKELLKHKFI (251 aa)). ATP-binding positions include 30-38 (IGKGSFGEV) and Lys-53. The active-site Proton acceptor is Asp-144. Position 178 is a phosphothreonine; by autocatalysis (Thr-178). The interval 296–343 (AEGHSDEESDSEGSDSESSSRESNPHPEWSFTTVRKKPDPKKLQNGEE) is disordered. Residues Ser-300, Ser-304, Ser-306, Ser-309, and Ser-325 each carry the phosphoserine modification. Phosphothreonine occurs at positions 327 and 328. Over residues 331-340 (KKPDPKKLQN) the composition is skewed to basic and acidic residues.

The protein belongs to the protein kinase superfamily. STE Ser/Thr protein kinase family. STE20 subfamily. In terms of assembly, homodimer. Interacts with PDCD10. Interacts with GOLGA2. Interacts with CTTNBP2NL. Interacts with RIPOR1 (via C-terminus); this interaction occurs in a PDCD10-dependent and Rho-independent manner. Interacts with PDCD10; this interaction is required for the association of STK26 with RIPOR1. Part of the core of STRIPAK complexes composed of PP2A catalytic and scaffolding subunits, the striatins (PP2A regulatory subunits), the striatin-associated proteins MOB4, STRIP1 and STRIP2, PDCD10 and members of the STE20 kinases, such as STK24 and STK26. Mg(2+) serves as cofactor.

It localises to the cytoplasm. The protein localises to the golgi apparatus. It carries out the reaction L-seryl-[protein] + ATP = O-phospho-L-seryl-[protein] + ADP + H(+). It catalyses the reaction L-threonyl-[protein] + ATP = O-phospho-L-threonyl-[protein] + ADP + H(+). Interaction with Golgi matrix protein GOLGA2 leads to autophosphorylation on Thr-178, possibly as a consequence of stabilization of dimer formation. May also be activated by C-terminal cleavage. Functionally, serine/threonine-protein kinase that acts as a mediator of cell growth. Modulates apoptosis. In association with STK24 negatively regulates Golgi reorientation in polarized cell migration upon RHO activation. Phosphorylates ATG4B at 'Ser-383', thereby increasing autophagic flux. Part of the striatin-interacting phosphatase and kinase (STRIPAK) complexes. STRIPAK complexes have critical roles in protein (de)phosphorylation and are regulators of multiple signaling pathways including Hippo, MAPK, nuclear receptor and cytoskeleton remodeling. Different types of STRIPAK complexes are involved in a variety of biological processes such as cell growth, differentiation, apoptosis, metabolism and immune regulation. This is Serine/threonine-protein kinase 26 from Mus musculus (Mouse).